Reading from the N-terminus, the 219-residue chain is N-(5'-phosphoribosyl)anthranilate isomerase (219 aa).

It belongs to the TrpF family.

It catalyses the reaction N-(5-phospho-beta-D-ribosyl)anthranilate = 1-(2-carboxyphenylamino)-1-deoxy-D-ribulose 5-phosphate. Its pathway is amino-acid biosynthesis; L-tryptophan biosynthesis; L-tryptophan from chorismate: step 3/5. The chain is N-(5'-phosphoribosyl)anthranilate isomerase from Dehalococcoides mccartyi (strain ATCC BAA-2266 / KCTC 15142 / 195) (Dehalococcoides ethenogenes (strain 195)).